The sequence spans 692 residues: Elongation factor G (692 aa).

Residues E8–L282 form the tr-type G domain. Residues A17 to T24, D81 to H85, and N135 to D138 each bind GTP.

Belongs to the TRAFAC class translation factor GTPase superfamily. Classic translation factor GTPase family. EF-G/EF-2 subfamily.

It localises to the cytoplasm. Its function is as follows. Catalyzes the GTP-dependent ribosomal translocation step during translation elongation. During this step, the ribosome changes from the pre-translocational (PRE) to the post-translocational (POST) state as the newly formed A-site-bound peptidyl-tRNA and P-site-bound deacylated tRNA move to the P and E sites, respectively. Catalyzes the coordinated movement of the two tRNA molecules, the mRNA and conformational changes in the ribosome. This chain is Elongation factor G, found in Geobacillus thermodenitrificans (strain NG80-2).